A 595-amino-acid polypeptide reads, in one-letter code: TNF receptor-associated factor family protein DDB_G0272348 (595 aa).

The disordered stretch occupies residues 14-64; the sequence is SFTNNNSNNNNNNNNNSNSNNNNNNNNNNINNNNNHNNNNKNNSNNKNEIN. Positions 17–64 are enriched in low complexity; the sequence is NNNSNNNNNNNNNSNSNNNNNNNNNNINNNNNHNNNNKNNSNNKNEIN. Residues 87–134 form an RING-type; degenerate zinc finger; it reads CTICSDLLVNSFHADKFKAVQCKNGHYTTCLNCWEKHLEKKKNCIQCG. 2 TRAF-type zinc fingers span residues 189-253 and 254-311; these read EHLK…INKE and SHNA…SKLS. A coiled-coil region spans residues 348-410; that stretch reads LLNGQNKKIT…QQQQSQQQQQ (63 aa). A compositionally biased stretch (low complexity) spans 409-440; it reads QQSQQQQQSQQSQQNNNSNSHFINNNNNNINN. The segment at 409–450 is disordered; that stretch reads QQSQQQQQSQQSQQNNNSNSHFINNNNNNINNVQMSDSPNGG. Residues 441-450 are compositionally biased toward polar residues; that stretch reads VQMSDSPNGG. Residues 456–584 enclose the MATH domain; sequence VYKNKWVISN…NDSITIEIEI (129 aa).

The protein belongs to the TNF receptor-associated factor family. A subfamily.

It localises to the cytoplasm. Probable adapter protein and signal transducer that links members of the tumor necrosis factor receptor family to different signaling pathways by association with the receptor cytoplasmic domain and kinases. This is TNF receptor-associated factor family protein DDB_G0272348 from Dictyostelium discoideum (Social amoeba).